Consider the following 396-residue polypeptide: Probable sugar efflux transporter (396 aa).

12 consecutive transmembrane segments (helical) span residues 15-35 (VVTL…PVGL), 50-70 (VGIM…PFML), 81-101 (LICL…SWSF), 103-123 (VLVI…SITA), 136-156 (AQAL…GLPL), 170-190 (FFAI…LLPL), 209-229 (PALM…YTAY), 246-266 (FATA…VIFG), 275-295 (ALVS…LPAA), 299-319 (IHLG…GLGM), 333-353 (VAMA…ALVG), and 364-384 (MIGY…IIIF).

This sequence belongs to the major facilitator superfamily. SotB (TC 2.A.1.2) family.

It is found in the cell inner membrane. Involved in the efflux of sugars. The physiological role may be the reduction of the intracellular concentration of toxic sugars or sugar metabolites. This Escherichia coli O127:H6 (strain E2348/69 / EPEC) protein is Probable sugar efflux transporter.